The chain runs to 356 residues: Phosphoribosyl pyrophosphate synthase-associated protein 1 (356 aa).

N-acetylmethionine is present on Met1. Residues Ser177 and Ser215 each carry the phosphoserine modification.

Belongs to the ribose-phosphate pyrophosphokinase family. As to quaternary structure, binds to PRPS1 and PRPS2.

In terms of biological role, seems to play a negative regulatory role in 5-phosphoribose 1-diphosphate synthesis. In Mus musculus (Mouse), this protein is Phosphoribosyl pyrophosphate synthase-associated protein 1 (Prpsap1).